The following is a 377-amino-acid chain: MADFLPSRSVLSVCFPGCVLTNGEAEQQRKSKEIDKCLSREKTYVKRLVKILLLGAGESGKSTFLKQMRIIHGQDFDQRAREEFRPTIYSNVIKGMRVLVDAREKLHIPWGDNKNQLHGDKLMAFDTRAPMAAQGMVETRVFLQYLPAIRALWEDSGIQNAYDRRREFQLGESVKYFLDNLDKLGVPDYIPSQQDILLARRPTKGIHEYDFEIKNVPFKMVDVGGQRSERKRWFECFDSVTSILFLVSSSEFDQVLMEDRQTNRLTESLNIFETIVNNRVFSNVSIILFLNKTDLLEEKVQVVSIKDYFLEFEGDPHCLRDVQKFLVECFRGKRRDQQQRPLYHHFTTAINTENIRLVFRDVKDTILHDNLKQLMLQ.

Residues C14 and C18 are each lipidated (S-palmitoyl cysteine). Residues 47–377 form the G-alpha domain; the sequence is RLVKILLLGA…HDNLKQLMLQ (331 aa). Residues 50–63 are G1 motif; sequence KILLLGAGESGKST. Residues 58-63, S173, and 197-200 contribute to the GTP site; these read ESGKST and LLAR. S62 serves as a coordination point for Mg(2+). The G2 motif stretch occupies residues 195-203; sequence DILLARRPT. T203 is a binding site for Mg(2+). T203 carries the phosphothreonine modification. The interval 218–227 is G3 motif; it reads FKMVDVGGQR. Residues 287-294 are G4 motif; the sequence is ILFLNKTD. Residues 291 to 294 and A349 contribute to the GTP site; that span reads NKTD. Residues 347 to 352 form a G5 motif region; sequence TTAINT.

This sequence belongs to the G-alpha family. G(12) subfamily. In terms of assembly, g proteins are composed of 3 units; alpha, beta and gamma. The alpha chain contains the guanine nucleotide binding site. Interacts with UBXD5. Interacts with HAX1. Interacts (in GTP-bound form) with PPP5C (via TPR repeats); activates PPP5C phosphatase activity and translocates PPP5C to the cell membrane. Interacts with RGS22. Interacts (in GTP-bound form) with ARHGEF1. Interacts (in GTP-bound form) with ARHGEF11 (via RGS domain). Interacts (in GTP-bound form) with ARHGEF12 (via RGS domain). Interacts with CTNND1. Interacts with GAS2L2. Interacts with GPR35. Interacts with GPR174. Post-translationally, phosphorylation on Thr-203 destabilizes the heterotrimer of alpha, beta and gamma, and inhibits Rho activation. Expressed in brain and testis, as well as in kidney and sperm (at protein level).

The protein localises to the membrane. Its subcellular location is the melanosome. It is found in the cytoplasm. The protein resides in the nucleus. In terms of biological role, guanine nucleotide-binding proteins (G proteins) are involved as modulators or transducers in various transmembrane signaling systems. Activates effector molecule RhoA by binding and activating RhoGEFs (ARHGEF1/p115RhoGEF, ARHGEF11/PDZ-RhoGEF and ARHGEF12/LARG). GNA13-dependent Rho signaling subsequently regulates transcription factor AP-1 (activating protein-1). Promotes tumor cell invasion and metastasis by activating Rho/ROCK signaling pathway. Inhibits CDH1-mediated cell adhesion in a process independent from Rho activation. In lymphoid follicles, transmits P2RY8- and S1PR2-dependent signals that lead to inhibition of germinal center (GC) B cell growth and migration outside the GC niche. This is Guanine nucleotide-binding protein subunit alpha-13 (Gna13) from Mus musculus (Mouse).